We begin with the raw amino-acid sequence, 130 residues long: Small ribosomal subunit protein uS9 (130 aa).

It belongs to the universal ribosomal protein uS9 family.

The sequence is that of Small ribosomal subunit protein uS9 from Anaeromyxobacter dehalogenans (strain 2CP-1 / ATCC BAA-258).